Reading from the N-terminus, the 314-residue chain is Mitochondrial 2-oxoglutarate/malate carrier protein (314 aa).

At A2 the chain carries N-acetylalanine. A Phosphoserine modification is found at S6. Solcar repeat units follow at residues V23 to R108, P117 to F208, and D217 to A306. A helical transmembrane segment spans residues K24–L42. The residue at position 57 (K57) is an N6-succinyllysine. K73 bears the N6-acetyllysine mark. The helical transmembrane segment at G83–I101 threads the bilayer. Residue Y102 is modified to Phosphotyrosine. A run of 3 helical transmembrane segments spans residues F119–A140, G183–Y202, and H222–V240. Position 256 is an N6-acetyllysine (K256). A helical transmembrane segment spans residues G281–L300.

It belongs to the mitochondrial carrier (TC 2.A.29) family. In terms of assembly, interacts with SMIM26. As to expression, expressed in liver, heart and brain.

It localises to the mitochondrion inner membrane. It catalyses the reaction (S)-malate(in) + 2-oxoglutarate(out) = (S)-malate(out) + 2-oxoglutarate(in). It carries out the reaction malonate(in) + 2-oxoglutarate(out) = malonate(out) + 2-oxoglutarate(in). The catalysed reaction is succinate(in) + 2-oxoglutarate(out) = succinate(out) + 2-oxoglutarate(in). The enzyme catalyses maleate(in) + 2-oxoglutarate(out) = maleate(out) + 2-oxoglutarate(in). It catalyses the reaction oxaloacetate(in) + 2-oxoglutarate(out) = oxaloacetate(out) + 2-oxoglutarate(in). Catalyzes the transport of 2-oxoglutarate (alpha-oxoglutarate) across the inner mitochondrial membrane in an electroneutral exchange for malate. Can also exchange 2-oxoglutarate for other dicarboxylic acids such as malonate, succinate, maleate and oxaloacetate, although with lower affinity. Contributes to several metabolic processes, including the malate-aspartate shuttle, the oxoglutarate/isocitrate shuttle, in gluconeogenesis from lactate, and in nitrogen metabolism. Maintains mitochondrial fusion and fission events, and the organization and morphology of cristae. Involved in the regulation of apoptosis. Helps protect from cytotoxic-induced apoptosis by modulating glutathione levels in mitochondria. In Rattus norvegicus (Rat), this protein is Mitochondrial 2-oxoglutarate/malate carrier protein (Slc25a11).